Reading from the N-terminus, the 66-residue chain is Large ribosomal subunit protein bL35 (66 aa).

A disordered region spans residues 20-40; that stretch reads GKIKSTQSAKRHGMTKRSKRS. Residues 28-40 are compositionally biased toward basic residues; the sequence is AKRHGMTKRSKRS.

It belongs to the bacterial ribosomal protein bL35 family.

This chain is Large ribosomal subunit protein bL35, found in Ehrlichia chaffeensis (strain ATCC CRL-10679 / Arkansas).